Reading from the N-terminus, the 273-residue chain is SPRY domain-containing SOCS box protein 1 (273 aa).

Residue tyrosine 31 is modified to Phosphotyrosine. The region spanning 33–231 is the B30.2/SPRY domain; the sequence is KPTRLDLLLD…IRMRYLNGLD (199 aa). Residues 232–273 form the SOCS box domain; sequence PEPLPLMDLCRRSVRLALGKGRLGEIHALPLPASLKAYLLYQ.

The protein belongs to the SPSB family. Component of the probable ECS(SPSB1) E3 ubiquitin-protein ligase complex which contains CUL5, RNF7/RBX2, Elongin BC complex and SPSB1. Interacts with CUL5, RNF7, ELOB and ELOC. Directly interacts with MET tyrosine kinase domain in the presence and in the absence of HGF, however HGF treatment has a positive effect on this interaction. When phosphorylated, interacts with RASA1 without affecting its stability. Interacts (via B30.2/SPRY domain) with PAWR; this interaction is direct and occurs in association with the Elongin BC complex. Interacts with NOS2 and EPHB2.

The protein resides in the cytoplasm. Its subcellular location is the cytosol. It functions in the pathway protein modification; protein ubiquitination. Functionally, substrate recognition component of a SCF-like ECS (Elongin BC-CUL2/5-SOCS-box protein) E3 ubiquitin-protein ligase complex which mediates the ubiquitination and subsequent proteasomal degradation of target proteins. Negatively regulates nitric oxide (NO) production and limits cellular toxicity in activated macrophages by mediating the ubiquitination and proteasomal degradation of NOS2. Acts as a bridge which links NOS2 with the ECS E3 ubiquitin ligase complex components ELOC and CUL5. The chain is SPRY domain-containing SOCS box protein 1 (SPSB1) from Bos taurus (Bovine).